Here is a 636-residue protein sequence, read N- to C-terminus: uncharacterized protein (636 aa).

Residues 10-36 (CLACRRKKVKCNRQYPCTRCLKYGEAC) constitute a DNA-binding region (zn(2)-C6 fungal-type). The segment covering 556 to 580 (NSQSTSEFVSPISDTENGSSSQQVS) has biased composition (polar residues). The tract at residues 556 to 581 (NSQSTSEFVSPISDTENGSSSQQVSE) is disordered.

It localises to the cytoplasm. Its subcellular location is the nucleus. This is an uncharacterized protein from Schizosaccharomyces pombe (strain 972 / ATCC 24843) (Fission yeast).